The following is a 434-amino-acid chain: Eukaryotic translation initiation factor 3 subunit E (434 aa).

The region spanning 219-392 is the PCI domain; sequence FFNHPKGRDL…GHVVMGTQPL (174 aa).

Belongs to the eIF-3 subunit E family. Component of the eukaryotic translation initiation factor 3 (eIF-3) complex. The eIF-3 complex interacts with pix. Interacts with mxt.

The protein resides in the cytoplasm. Its function is as follows. Component of the eukaryotic translation initiation factor 3 (eIF-3) complex, which is involved in protein synthesis of a specialized repertoire of mRNAs and, together with other initiation factors, stimulates binding of mRNA and methionyl-tRNAi to the 40S ribosome. The eIF-3 complex specifically targets and initiates translation of a subset of mRNAs involved in cell proliferation. This chain is Eukaryotic translation initiation factor 3 subunit E (eIF3-S6), found in Drosophila pseudoobscura pseudoobscura (Fruit fly).